Reading from the N-terminus, the 125-residue chain is Small ribosomal subunit protein uS13 (125 aa).

The segment at 92 to 125 (RRSLPARGQNTQTNARTRKGRRKTVAGKKKAVKK) is disordered. Over residues 107–125 (RTRKGRRKTVAGKKKAVKK) the composition is skewed to basic residues.

It belongs to the universal ribosomal protein uS13 family. Part of the 30S ribosomal subunit. Forms a loose heterodimer with protein S19. Forms two bridges to the 50S subunit in the 70S ribosome.

Located at the top of the head of the 30S subunit, it contacts several helices of the 16S rRNA. In the 70S ribosome it contacts the 23S rRNA (bridge B1a) and protein L5 of the 50S subunit (bridge B1b), connecting the 2 subunits; these bridges are implicated in subunit movement. Contacts the tRNAs in the A and P-sites. This Chlorobium phaeobacteroides (strain BS1) protein is Small ribosomal subunit protein uS13.